We begin with the raw amino-acid sequence, 749 residues long: 5-methyltetrahydropteroyltriglutamate--homocysteine methyltransferase (749 aa).

5-methyltetrahydropteroyltri-L-glutamate contacts are provided by residues 15–18 (RELK) and Lys-114. L-homocysteine contacts are provided by residues 425 to 427 (IGS) and Glu-478. Residues 425 to 427 (IGS) and Glu-478 contribute to the L-methionine site. Trp-555 is a binding site for 5-methyltetrahydropteroyltri-L-glutamate. Residue Asp-593 coordinates L-homocysteine. Asp-593 contributes to the L-methionine binding site. Glu-599 is a 5-methyltetrahydropteroyltri-L-glutamate binding site. Positions 636, 638, and 660 each coordinate Zn(2+). The active-site Proton donor is His-689. Residue Cys-721 coordinates Zn(2+).

Belongs to the vitamin-B12 independent methionine synthase family. Zn(2+) is required as a cofactor.

It catalyses the reaction 5-methyltetrahydropteroyltri-L-glutamate + L-homocysteine = tetrahydropteroyltri-L-glutamate + L-methionine. Its pathway is amino-acid biosynthesis; L-methionine biosynthesis via de novo pathway; L-methionine from L-homocysteine (MetE route): step 1/1. In terms of biological role, catalyzes the transfer of a methyl group from 5-methyltetrahydrofolate to homocysteine resulting in methionine formation. The protein is 5-methyltetrahydropteroyltriglutamate--homocysteine methyltransferase of Streptococcus suis (strain 05ZYH33).